The sequence spans 174 residues: Gamma-crystallin C (174 aa).

Beta/gamma crystallin 'Greek key' domains follow at residues 2 to 40 (GKITFFEDRSFQGRCYECSSDCPNLQTYFSRCNSVRVDS) and 41 to 83 (GCWM…RLIP). Cys-23 carries the S-methylcysteine modification. The interval 84 to 87 (HAGS) is connecting peptide. Beta/gamma crystallin 'Greek key' domains are found at residues 88–128 (HRMR…QVLE) and 129–171 (GCWV…RRVV).

The protein belongs to the beta/gamma-crystallin family.

Its function is as follows. Crystallins are the dominant structural components of the vertebrate eye lens. The chain is Gamma-crystallin C (Crygc) from Mus musculus (Mouse).